Here is a 266-residue protein sequence, read N- to C-terminus: Non-structural maintenance of chromosomes element 1 homolog (266 aa).

The interaction with NSMCE3 stretch occupies residues 1–102 (MQGNTRRTGV…SVSKMASDFA (102 aa)). The RING-type; atypical zinc finger occupies 191 to 232 (CNICRSLLIQGQSCETCGIRMHLPCVAKYFQSSSEPHCPHCN). Basic and acidic residues predominate over residues 243–252 (FDPEKERETG). The interval 243-266 (FDPEKERETGMSRSNKRPSRSRQH) is disordered. Basic residues predominate over residues 256 to 266 (SNKRPSRSRQH).

Belongs to the NSE1 family. As to quaternary structure, component of the SMC5-SMC6 complex which consists at least of SMC5, SMC6, NSMCE2, NSMCE1, NSMCE4A or EID3 and NSMCE3. NSMCE1, NSMCE4A or EID3 and NSMCE3 probably form a subcomplex that bridges the head domains of the SMC5-SMC6 heterodimer. Interacts with NSMCE3. Post-translationally, ubiquitinated.

The protein localises to the nucleus. Its subcellular location is the chromosome. It localises to the telomere. The enzyme catalyses S-ubiquitinyl-[E2 ubiquitin-conjugating enzyme]-L-cysteine + [acceptor protein]-L-lysine = [E2 ubiquitin-conjugating enzyme]-L-cysteine + N(6)-ubiquitinyl-[acceptor protein]-L-lysine.. RING-type zinc finger-containing E3 ubiquitin ligase that assembles with melanoma antigen protein (MAGE) to catalyze the direct transfer of ubiquitin from E2 ubiquitin-conjugating enzyme to a specific substrate. Within MAGE-RING ubiquitin ligase complex, MAGE stimulates and specifies ubiquitin ligase activity likely through recruitment and/or stabilization of the E2 ubiquitin-conjugating enzyme at the E3:substrate complex. Involved in maintenance of genome integrity, DNA damage response and DNA repair. NSMCE3/MAGEG1 and NSMCE1 ubiquitin ligase are components of SMC5-SMC6 complex and may positively regulate homologous recombination-mediated DNA repair. This Bos taurus (Bovine) protein is Non-structural maintenance of chromosomes element 1 homolog (NSMCE1).